Here is a 248-residue protein sequence, read N- to C-terminus: DNA repair protein RecO (248 aa).

This sequence belongs to the RecO family.

Its function is as follows. Involved in DNA repair and RecF pathway recombination. This is DNA repair protein RecO from Thermoanaerobacter sp. (strain X514).